The primary structure comprises 493 residues: Glutamyl-tRNA(Gln) amidotransferase subunit A (493 aa).

Active-site charge relay system residues include lysine 78 and serine 158. Serine 182 (acyl-ester intermediate) is an active-site residue.

The protein belongs to the amidase family. GatA subfamily. In terms of assembly, heterotrimer of A, B and C subunits.

The enzyme catalyses L-glutamyl-tRNA(Gln) + L-glutamine + ATP + H2O = L-glutaminyl-tRNA(Gln) + L-glutamate + ADP + phosphate + H(+). In terms of biological role, allows the formation of correctly charged Gln-tRNA(Gln) through the transamidation of misacylated Glu-tRNA(Gln) in organisms which lack glutaminyl-tRNA synthetase. The reaction takes place in the presence of glutamine and ATP through an activated gamma-phospho-Glu-tRNA(Gln). The chain is Glutamyl-tRNA(Gln) amidotransferase subunit A from Rickettsia rickettsii (strain Iowa).